Consider the following 290-residue polypeptide: Poly-beta-1,6-N-acetyl-D-glucosamine N-deacetylase (290 aa).

The first 28 residues, 1-28 (MKYRKLIILVLSILIILPVSTLDGHHIA), serve as a signal peptide directing secretion. The region spanning 114-290 (RSVWINFDDM…KRWDGFHEKD (177 aa)) is the NodB homology domain.

The protein belongs to the polysaccharide deacetylase family.

It localises to the secreted. Its subcellular location is the cell wall. In terms of biological role, catalyzes the N-deacetylation of poly-beta-1,6-N-acetyl-D-glucosamine (PNAG, also referred to as PIA), a biofilm adhesin polysaccharide. N-deacetylation is crucial for attachment of the polysaccharide to the bacterial cell surface; it leads to the introduction of positive charges in the otherwise neutral PIA polymer, allowing electrostatic interactions. In Staphylococcus aureus (strain MRSA252), this protein is Poly-beta-1,6-N-acetyl-D-glucosamine N-deacetylase (icaB).